The chain runs to 256 residues: MPRSRALILGVLALTTMLSLCGGEDDIEADHVGSYGITVYQSPGDIGQYTFEFDGDELFYVDLDKKETVWMLPEFAQLRRFEPQGGLQNIATGKHNLEILTKRSNSTPATNEAPQATVFPKSPVLLGQPNTLICFVDNIFPPVINITWLRNSKSVTDGVYETSFFVNRDYSFHKLSYLTFIPSDDDIYDCKVEHWGLEEPVLKHWEPEIPAPMSELTETVVCALGLSVGLVGIVVGTIFIIQGLRSGGTSRHPGPL.

A signal peptide spans 1–23 (MPRSRALILGVLALTTMLSLCGG). The tract at residues 24 to 111 (EDDIEADHVG…KRSNSTPATN (88 aa)) is alpha-1. Topologically, residues 24-218 (EDDIEADHVG…IPAPMSELTE (195 aa)) are extracellular. N-linked (GlcNAc...) asparagine glycans are attached at residues Asn105 and Asn145. The segment at 112–205 (EAPQATVFPK…GLEEPVLKHW (94 aa)) is alpha-2. The 93-residue stretch at 114–206 (PQATVFPKSP…LEEPVLKHWE (93 aa)) folds into the Ig-like C1-type domain. Cys134 and Cys190 form a disulfide bridge. Positions 206-218 (EPEIPAPMSELTE) are connecting peptide. A helical transmembrane segment spans residues 219-241 (TVVCALGLSVGLVGIVVGTIFII). The Cytoplasmic portion of the chain corresponds to 242–256 (QGLRSGGTSRHPGPL).

Belongs to the MHC class II family.

The protein localises to the membrane. In Mus musculus (Mouse), this protein is H-2 class II histocompatibility antigen, A-K alpha chain (H2-Aa).